A 116-amino-acid chain; its full sequence is Large ribosomal subunit protein bL19 (116 aa).

The protein belongs to the bacterial ribosomal protein bL19 family.

Its function is as follows. This protein is located at the 30S-50S ribosomal subunit interface and may play a role in the structure and function of the aminoacyl-tRNA binding site. This chain is Large ribosomal subunit protein bL19, found in Flavobacterium johnsoniae (strain ATCC 17061 / DSM 2064 / JCM 8514 / BCRC 14874 / CCUG 350202 / NBRC 14942 / NCIMB 11054 / UW101) (Cytophaga johnsonae).